Here is a 507-residue protein sequence, read N- to C-terminus: Protein MosB (507 aa).

The H-T-H motif DNA-binding region spans Gln256–Cys275. N6-(pyridoxal phosphate)lysine is present on Lys282.

This sequence belongs to the DegT/DnrJ/EryC1 family.

Its function is as follows. Involved in the biosynthesis of the rhizopine 3-O-methyl-scyllo-inosamine. May have a regulatory role in controlling the housekeeping genes within the nodule which are involved in the biosynthesis of the rhizopine backbone. This is Protein MosB (mosB) from Rhizobium meliloti (Ensifer meliloti).